Here is a 367-residue protein sequence, read N- to C-terminus: MEAEVINQLNNTLNDLEKRSEDIRVYMDYQGKKDRLEEVIGLSEDPELWNDPKRAQEIGKERKILEGIVLTLDNIATGIEDNRMLIEMTVEENDEEGFAAVQEDVAGLEKQMADLEFKRMFNQPADPNNCFIDITAGAGGTEAEDWAGMLFRMYSRYAERKGFKIEILEEDDGEIAGINRATIRVEGEYAYGLLRTETGVHRLVRYSPFDSNNKRHTSFASVFVYPEIDDSIEIEINPADLRIDTYRASGAGGQHINKTDSAVRITHEPTGIVVQCQNDRSQHANKAAAMEMLKSKLYELEMRKRNEEKQALEEGKSDVGWGSQIRSYVLDSSRIKDLRTGYEVGNTKAVLDGDLDGFIEASLKQGV.

Glutamine 254 carries the N5-methylglutamine modification.

Belongs to the prokaryotic/mitochondrial release factor family. In terms of processing, methylated by PrmC. Methylation increases the termination efficiency of RF2.

Its subcellular location is the cytoplasm. Functionally, peptide chain release factor 2 directs the termination of translation in response to the peptide chain termination codons UGA and UAA. The sequence is that of Peptide chain release factor 2 from Neisseria meningitidis serogroup A / serotype 4A (strain DSM 15465 / Z2491).